The chain runs to 3255 residues: Genome polyprotein (3255 aa).

In terms of domain architecture, Peptidase S30 spans V292 to Y437. Active-site for P1 proteinase activity residues include H345, D354, and S388. Positions K489–C492 match the Involved in interaction with stylet and aphid transmission motif. Residues P747 to K749 carry the Involved in virions binding and aphid transmission motif. The Peptidase C6 domain maps to M773–G895. Residues C781 and H854 each act as for helper component proteinase activity in the active site. One can recognise a Helicase ATP-binding domain in the interval E1397 to E1549. G1410 to S1417 provides a ligand contact to ATP. The DECH box signature appears at D1499 to H1502. A Helicase C-terminal domain is found at D1568–S1727. The Nuclear localization signal signature appears at E2062–K2069. Y2084 is subject to O-(5'-phospho-RNA)-tyrosine. The Peptidase C4 domain occupies S2215–N2433. Catalysis depends on for nuclear inclusion protein A activity residues H2260, D2295, and C2365. One can recognise a RdRp catalytic domain in the interval W2699–L2823. A disordered region spans residues A2980–K3028. Positions K2989–I3005 are enriched in basic and acidic residues. Position 3237 is a phosphothreonine (T3237).

This sequence belongs to the potyviridae genome polyprotein family. In terms of assembly, interacts with host eIF4E protein (via cap-binding region); this interaction mediates the translation of the VPg-viral RNA conjugates. Part of a complex that comprises VPg, RNA, host EIF4E and EIF4G; this interaction mediates the translation of the VPg-viral RNA conjugates. In terms of processing, VPg is uridylylated by the polymerase and is covalently attached to the 5'-end of the genomic RNA. This uridylylated form acts as a nucleotide-peptide primer for the polymerase. Potyviral RNA is expressed as two polyproteins which undergo post-translational proteolytic processing. Genome polyprotein is processed by NIa-pro, P1 and HC-pro proteinases resulting in the production of at least ten individual proteins. P3N-PIPO polyprotein is cleaved by P1 and HC-pro proteinases resulting in the production of three individual proteins. The P1 proteinase and the HC-pro cleave only their respective C-termini autocatalytically. 6K1 is essential for proper proteolytic separation of P3 from CI.

It is found in the host cytoplasmic vesicle. It localises to the host nucleus. The protein localises to the virion. The enzyme catalyses RNA(n) + a ribonucleoside 5'-triphosphate = RNA(n+1) + diphosphate. It carries out the reaction Hydrolyzes glutaminyl bonds, and activity is further restricted by preferences for the amino acids in P6 - P1' that vary with the species of potyvirus, e.g. Glu-Xaa-Xaa-Tyr-Xaa-Gln-|-(Ser or Gly) for the enzyme from tobacco etch virus. The natural substrate is the viral polyprotein, but other proteins and oligopeptides containing the appropriate consensus sequence are also cleaved.. It catalyses the reaction Hydrolyzes a Gly-|-Gly bond at its own C-terminus, commonly in the sequence -Tyr-Xaa-Val-Gly-|-Gly, in the processing of the potyviral polyprotein.. Its function is as follows. Required for aphid transmission and also has proteolytic activity. Only cleaves a Gly-Gly dipeptide at its own C-terminus. Interacts with virions and aphid stylets. Acts as a suppressor of RNA-mediated gene silencing, also known as post-transcriptional gene silencing (PTGS), a mechanism of plant viral defense that limits the accumulation of viral RNAs. May have RNA-binding activity. Functionally, has helicase activity. It may be involved in replication. In terms of biological role, indispensable for virus replication. Reduces the abundance of host transcripts related to jasmonic acid biosynthesis therefore altering the host defenses. In order to increase its own stability, decreases host protein degradation pathways. Indispensable for virus replication. Its function is as follows. Mediates the cap-independent, EIF4E-dependent translation of viral genomic RNAs. Binds to the cap-binding site of host EIF4E and thus interferes with the host EIF4E-dependent mRNA export and translation. VPg-RNA directly binds EIF4E and is a template for transcription. Also forms trimeric complexes with EIF4E-EIF4G, which are templates for translation. Functionally, has RNA-binding and proteolytic activities. In terms of biological role, an RNA-dependent RNA polymerase that plays an essential role in the virus replication. Involved in aphid transmission, cell-to-cell and systemis movement, encapsidation of the viral RNA and in the regulation of viral RNA amplification. The protein is Genome polyprotein of Lettuce mosaic virus (strain 0 / isolate French) (LMV).